A 623-amino-acid polypeptide reads, in one-letter code: Kelch repeat and BTB domain-containing protein 12 (623 aa).

The BTB domain occupies 31-98 (IDVVLTAEGE…MYNAALEINN (68 aa)). Positions 133–235 (CLGIYYFAKQ…NPSFLRQALR (103 aa)) constitute a BACK domain. 4 Kelch repeats span residues 386-436 (DLYV…TVNN), 437-492 (KLYV…VVNS), 494-547 (IYVL…STNA), and 553-603 (KLYV…LVAR).

The protein is Kelch repeat and BTB domain-containing protein 12 (KBTBD12) of Homo sapiens (Human).